A 194-amino-acid chain; its full sequence is Phosphoheptose isomerase (194 aa).

One can recognise an SIS domain in the interval 37–194 (ISNSFKQGGK…LIEFEMAKQA (158 aa)). 52–54 (NGG) is a substrate binding site. 2 residues coordinate Zn(2+): His-61 and Glu-65. Substrate-binding positions include Glu-65, 93 to 94 (ND), 119 to 121 (STS), Ser-124, and Gln-172. Zn(2+) contacts are provided by Gln-172 and His-180.

This sequence belongs to the SIS family. GmhA subfamily. In terms of assembly, homotetramer. It depends on Zn(2+) as a cofactor.

It localises to the cytoplasm. It carries out the reaction 2 D-sedoheptulose 7-phosphate = D-glycero-alpha-D-manno-heptose 7-phosphate + D-glycero-beta-D-manno-heptose 7-phosphate. Its pathway is carbohydrate biosynthesis; D-glycero-D-manno-heptose 7-phosphate biosynthesis; D-glycero-alpha-D-manno-heptose 7-phosphate and D-glycero-beta-D-manno-heptose 7-phosphate from sedoheptulose 7-phosphate: step 1/1. Its function is as follows. Catalyzes the isomerization of sedoheptulose 7-phosphate in D-glycero-D-manno-heptose 7-phosphate. This is Phosphoheptose isomerase from Haemophilus influenzae (strain PittGG).